Here is an 863-residue protein sequence, read N- to C-terminus: Aminopeptidase N (863 aa).

Residues E124 and 263–267 each bind substrate; that span reads GAMEN. Residue H299 coordinates Zn(2+). The Proton acceptor role is filled by E300. H303 and E322 together coordinate Zn(2+).

Belongs to the peptidase M1 family. Zn(2+) is required as a cofactor.

It catalyses the reaction Release of an N-terminal amino acid, Xaa-|-Yaa- from a peptide, amide or arylamide. Xaa is preferably Ala, but may be most amino acids including Pro (slow action). When a terminal hydrophobic residue is followed by a prolyl residue, the two may be released as an intact Xaa-Pro dipeptide.. Its function is as follows. Aminopeptidase N is involved in the degradation of intracellular peptides generated by protein breakdown during normal growth as well as in response to nutrient starvation. This Caulobacter vibrioides (strain ATCC 19089 / CIP 103742 / CB 15) (Caulobacter crescentus) protein is Aminopeptidase N (pepN).